The primary structure comprises 401 residues: Probable peptidoglycan glycosyltransferase FtsW (401 aa).

Over 1-26 (MAEVLRWLRLDLGQSGGLAWERLDWR) the chain is Cytoplasmic. The chain crosses the membrane as a helical span at residues 27–47 (LALTVLALAGLGLVMVGSASV). At 48-65 (SIAEGATGDPLHYLYRQA) the chain is on the periplasmic side. Residues 66–86 (VFLAVALMAAVACLHLSLDQF) form a helical membrane-spanning segment. Topologically, residues 87-88 (YR) are cytoplasmic. The helical transmembrane segment at 89–109 (GGPVLLVLGFFLLLVVLIPGV) threads the bilayer. The Periplasmic portion of the chain corresponds to 110–118 (GREVNGATR). A helical membrane pass occupies residues 119–139 (WIPLGLINLQVAEVARVCFII). Residues 140–154 (YLAGYCVRRHAELPN) lie on the Cytoplasmic side of the membrane. The helical transmembrane segment at 155-175 (TSSAFAVPLAVFSLAAVLLLA) threads the bilayer. Over 176–180 (QPDFG) the chain is Periplasmic. A helical membrane pass occupies residues 181–201 (TALVLMATALGLLFLAGASLW). A topological domain (cytoplasmic) is located at residue Arg-202. A helical transmembrane segment spans residues 203 to 223 (IGVLGLLLAGAAWLLIVGSPY). The Periplasmic segment spans residues 224–278 (RWQRLTTFTDPWADPFNAGFQLTQSLIAIGRGEWFGVGLGASVQKLFYLPEAHTD). The helical transmembrane segment at 279 to 299 (FLFAVLAEELGLLGVVVVVAL) threads the bilayer. Topologically, residues 300–322 (FTYLAWRGMQIGLASLRADRPFG) are cytoplasmic. A helical membrane pass occupies residues 323-343 (AYLAWGLTISIGLQAFINMAV). Over 344–354 (TMGLLPTKGLT) the chain is Periplasmic. Residues 355-375 (LPLMSYGGSSLIMTGIALALL) traverse the membrane as a helical segment. The Cytoplasmic segment spans residues 376–401 (LRVDYEARLAAQQPRPRKRPSGRVRP).

This sequence belongs to the SEDS family. FtsW subfamily.

It localises to the cell inner membrane. The enzyme catalyses [GlcNAc-(1-&gt;4)-Mur2Ac(oyl-L-Ala-gamma-D-Glu-L-Lys-D-Ala-D-Ala)](n)-di-trans,octa-cis-undecaprenyl diphosphate + beta-D-GlcNAc-(1-&gt;4)-Mur2Ac(oyl-L-Ala-gamma-D-Glu-L-Lys-D-Ala-D-Ala)-di-trans,octa-cis-undecaprenyl diphosphate = [GlcNAc-(1-&gt;4)-Mur2Ac(oyl-L-Ala-gamma-D-Glu-L-Lys-D-Ala-D-Ala)](n+1)-di-trans,octa-cis-undecaprenyl diphosphate + di-trans,octa-cis-undecaprenyl diphosphate + H(+). The protein operates within cell wall biogenesis; peptidoglycan biosynthesis. In terms of biological role, peptidoglycan polymerase that is essential for cell division. This is Probable peptidoglycan glycosyltransferase FtsW from Alkalilimnicola ehrlichii (strain ATCC BAA-1101 / DSM 17681 / MLHE-1).